The primary structure comprises 93 residues: Transcription factor PRE3 (93 aa).

The bHLH domain occupies 6–61 (SRSRQSSGTSRISEDQINDLIIKLQQLLPELRDSRRSDKVSAARVLQDTCNYIRNL).

In terms of assembly, homodimer. Interacts with BHLH 147, BHLH148, BHLH149, BHLH150 and IBH1. Interacts with SIEL. As to expression, expressed in root and shoot meristems, and young siliques. Low levels detected in all aerial tissues.

It localises to the nucleus. Its subcellular location is the cytoplasm. Its function is as follows. Atypical and probable non DNA-binding bHLH transcription factor required for MONOPTEROS-dependent root initiation in embryo. Promotes the correct definition of the hypophysis cell division plane. Transcriptionally controlled by MONOPTEROS. Moves from its site of synthesis in pro-embryos cells into the hypophysis. Regulates brassinosteroid (BR) signaling by sequestering negative BR signaling components. May function as positive regulator of gibberellin signaling. May play a role in the regulation of light signaling and possibly auxin signaling. In Arabidopsis thaliana (Mouse-ear cress), this protein is Transcription factor PRE3 (PRE3).